The primary structure comprises 187 residues: MRQGLLVLALVLVLVLVLAAGSQVQEWYPRESHALNWNKFSGFWYILATATDAQGFLPARDKRKLGASVVKVNKVGQLRVLLAFRRGQGCGRAQPRHPGTSGHLWASLSVKGVKAFHVLSTDYSYGLVYLRLGRATQNYKNLLLFHRQNVSSFQSLKEFMDACDILGLSKAAVILPKDASRTHTILP.

Residues 1 to 19 (MRQGLLVLALVLVLVLVLA) form the signal peptide. Residues C90 and C163 are joined by a disulfide bond. Residue N149 is glycosylated (N-linked (GlcNAc...) asparagine). K170 is modified (N6-acetyllysine).

This sequence belongs to the calycin superfamily. Lipocalin family.

The protein localises to the secreted. In terms of biological role, may play a role in male fertility. May act as a retinoid carrier protein within the epididymis. In Homo sapiens (Human), this protein is Epididymal-specific lipocalin-10 (LCN10).